Here is a 313-residue protein sequence, read N- to C-terminus: 2,3-dihydroxyphenylpropionate/2,3-dihydroxicinnamic acid 1,2-dioxygenase (313 aa).

Catalysis depends on His115, which acts as the Proton donor. His179 functions as the Proton acceptor in the catalytic mechanism.

It belongs to the LigB/MhpB extradiol dioxygenase family. Homotetramer. Fe(2+) serves as cofactor.

The enzyme catalyses 3-(2,3-dihydroxyphenyl)propanoate + O2 = (2Z,4E)-2-hydroxy-6-oxonona-2,4-dienedioate + H(+). It catalyses the reaction (2E)-3-(2,3-dihydroxyphenyl)prop-2-enoate + O2 = (2Z,4E,7E)-2-hydroxy-6-oxonona-2,4,7-trienedioate + H(+). Its pathway is aromatic compound metabolism; 3-phenylpropanoate degradation. Catalyzes the non-heme iron(II)-dependent oxidative cleavage of 2,3-dihydroxyphenylpropionic acid and 2,3-dihydroxicinnamic acid into 2-hydroxy-6-ketononadienedioate and 2-hydroxy-6-ketononatrienedioate, respectively. The protein is 2,3-dihydroxyphenylpropionate/2,3-dihydroxicinnamic acid 1,2-dioxygenase of Mycobacterium ulcerans (strain Agy99).